We begin with the raw amino-acid sequence, 234 residues long: CKLF-like MARVEL transmembrane domain-containing protein 4 (234 aa).

Acidic residues predominate over residues 1 to 11 (MRSGEELDGFE). Positions 1–38 (MRSGEELDGFEGEASSTSMISGASSPYQPTTEPVSQRR) are disordered. The segment covering 15 to 25 (SSTSMISGASS) has biased composition (low complexity). The MARVEL domain maps to 49-176 (YLRGALGRLK…NTFLAVQKWR (128 aa)). A run of 4 helical transmembrane segments spans residues 59 to 79 (VAQVILALIAFICIETIMACS), 85 to 105 (YFFEFVSCSAFVVTGVLLIMF), 123 to 143 (LVNTGLSAFLFFIASIVLAAL), and 151 to 171 (IAAVIFGFLATAAYAVNTFLA). Phosphoserine is present on S194.

It belongs to the chemokine-like factor family. As to quaternary structure, interacts with PD-L1/CD274 and CMTM6. Highly expressed in testis and prostate.

The protein resides in the membrane. Acts as a backup for CMTM6 to regulate plasma membrane expression of PD-L1/CD274, an immune inhibitory ligand critical for immune tolerance to self and antitumor immunity. May protect PD-L1/CD274 from being polyubiquitinated and targeted for degradation. The chain is CKLF-like MARVEL transmembrane domain-containing protein 4 from Homo sapiens (Human).